The sequence spans 264 residues: Small ribosomal subunit protein uS2 (264 aa).

It belongs to the universal ribosomal protein uS2 family.

The protein is Small ribosomal subunit protein uS2 of Latilactobacillus sakei subsp. sakei (strain 23K) (Lactobacillus sakei subsp. sakei).